Consider the following 358-residue polypeptide: Low-specificity L-threonine aldolase 1 (358 aa).

The residue at position 207 (Lys-207) is an N6-(pyridoxal phosphate)lysine.

This sequence belongs to the threonine aldolase family. Requires pyridoxal 5'-phosphate as cofactor. As to expression, expressed in root tips, seedlings, carpels and seeds.

The enzyme catalyses L-threonine = acetaldehyde + glycine. The catalysed reaction is L-allo-threonine = acetaldehyde + glycine. It participates in amino-acid degradation; L-threonine degradation via aldolase pathway; acetaldehyde and glycine from L-threonine: step 1/1. Functionally, threonine aldolase involved in threonine degradation to glycine. May play a role in the removal of L-allo-threonine. The polypeptide is Low-specificity L-threonine aldolase 1 (Arabidopsis thaliana (Mouse-ear cress)).